Here is a 388-residue protein sequence, read N- to C-terminus: Chorismate synthase (388 aa).

NADP(+) contacts are provided by R39 and R45. FMN contacts are provided by residues 130-132, 251-252, G296, 311-315, and R337; these read RSS, NA, and KPIPT.

Belongs to the chorismate synthase family. In terms of assembly, homotetramer. Requires FMNH2 as cofactor.

The enzyme catalyses 5-O-(1-carboxyvinyl)-3-phosphoshikimate = chorismate + phosphate. It functions in the pathway metabolic intermediate biosynthesis; chorismate biosynthesis; chorismate from D-erythrose 4-phosphate and phosphoenolpyruvate: step 7/7. Functionally, catalyzes the anti-1,4-elimination of the C-3 phosphate and the C-6 proR hydrogen from 5-enolpyruvylshikimate-3-phosphate (EPSP) to yield chorismate, which is the branch point compound that serves as the starting substrate for the three terminal pathways of aromatic amino acid biosynthesis. This reaction introduces a second double bond into the aromatic ring system. In Geobacillus kaustophilus (strain HTA426), this protein is Chorismate synthase.